The primary structure comprises 284 residues: Pheromone-regulated membrane protein 4 (284 aa).

Residues 20–38 (IISLTLVLLGVFSFLLLTW) form a helical membrane-spanning segment. In terms of domain architecture, Glutaredoxin spans 157 to 272 (RTDFLDIIRT…PLLKSEARGN (116 aa)).

The protein resides in the membrane. This chain is Pheromone-regulated membrane protein 4 (PRM4), found in Saccharomyces cerevisiae (strain ATCC 204508 / S288c) (Baker's yeast).